The primary structure comprises 40 residues: uncharacterized protein (40 aa).

This is an uncharacterized protein from Myxococcus xanthus (strain DK1622).